Reading from the N-terminus, the 749-residue chain is Ribosome-releasing factor 2, mitochondrial (749 aa).

A mitochondrion-targeting transit peptide spans 1 to 22 (MLLLLCNRSVVPRGIRRILRTA). Residues 44–322 (KNIRNIGILA…AVLKYLPAPN (279 aa)) enclose the tr-type G domain. GTP-binding positions include 53-60 (AHIDGGKT), 117-121 (DTPGH), and 171-174 (NKMD).

This sequence belongs to the TRAFAC class translation factor GTPase superfamily. Classic translation factor GTPase family. EF-G/EF-2 subfamily.

The protein localises to the mitochondrion. Mitochondrial GTPase that mediates the disassembly of ribosomes from messenger RNA at the termination of mitochondrial protein biosynthesis. Not involved in the GTP-dependent ribosomal translocation step during translation elongation. The protein is Ribosome-releasing factor 2, mitochondrial of Culex quinquefasciatus (Southern house mosquito).